The chain runs to 166 residues: Interferon gamma (166 aa).

The first 23 residues, 1–23, serve as a signal peptide directing secretion; it reads MKYTSYFLALLLCGLLGFSGSYG. Glutamine 24 carries the pyrrolidone carboxylic acid modification. N-linked (GlcNAc...) asparagine glycosylation is found at asparagine 39 and asparagine 106.

The protein belongs to the type II (or gamma) interferon family. Homodimer. Interacts with IFNGR1 (via extracellular domain); this interaction promotes IFNGR1 dimerization. Released primarily from activated T lymphocytes.

The protein resides in the secreted. In terms of biological role, type II interferon produced by immune cells such as T-cells and NK cells that plays crucial roles in antimicrobial, antiviral, and antitumor responses by activating effector immune cells and enhancing antigen presentation. Primarily signals through the JAK-STAT pathway after interaction with its receptor IFNGR1 to affect gene regulation. Upon IFNG binding, IFNGR1 intracellular domain opens out to allow association of downstream signaling components JAK2, JAK1 and STAT1, leading to STAT1 activation, nuclear translocation and transcription of IFNG-regulated genes. Many of the induced genes are transcription factors such as IRF1 that are able to further drive regulation of a next wave of transcription. Plays a role in class I antigen presentation pathway by inducing a replacement of catalytic proteasome subunits with immunoproteasome subunits. In turn, increases the quantity, quality, and repertoire of peptides for class I MHC loading. Increases the efficiency of peptide generation also by inducing the expression of activator PA28 that associates with the proteasome and alters its proteolytic cleavage preference. Up-regulates as well MHC II complexes on the cell surface by promoting expression of several key molecules such as cathepsins B/CTSB, H/CTSH, and L/CTSL. Participates in the regulation of hematopoietic stem cells during development and under homeostatic conditions by affecting their development, quiescence, and differentiation. In Bos taurus (Bovine), this protein is Interferon gamma (IFNG).